Here is a 543-residue protein sequence, read N- to C-terminus: MAKDIKFSADARAAMVRGVDMLADTVKVTLGPKGRNVVLEKAFGSPLITNDGVTIAKEIELEDHFENMGAKLVSEVASKTNDIAGDGTTTATVLTQAIVHEGLKNVTAGANPIGIRRGIETATATAVEALKAIAQPVSGKEAIAQVAAVSSRSEKVGEYISEAMERVGNDGVITIEESRGMETELEVVEGMQFDRGYLSQYMVTDNEKMVADLENPFILITDKKVSNIQDILPLLEEVLKTNRPLLIIADDVDGEALPTLVLNKIRGTFNVVAVKAPGFGDRRKAMLEDIAILTGGTVITEDLGLELKDATMTALGQAAKITVDKDSTVIVEGSGSSEAIANRIALIKSQLETTTSDFDREKLQERLAKLGGGVAVIKVGAPTETALKEMKLRIEDALNATRAAVEEGIVAGGGTALITVIEKVAALELEGDDATGRNIVLRALEEPVRQIALNAGYEGSVVIDKLKNSPAGTGFNAATGEWVDMIKTGIIDPVKVTRSALQNAASVASLILTTEAVVANKPEPAAPAPAMPAGMDPGMMGGF.

ATP is bound by residues 29–32, 86–90, G413, 476–478, and D492; these read TLGP, DGTTT, and NAA.

This sequence belongs to the chaperonin (HSP60) family. In terms of assembly, forms a cylinder of 14 subunits composed of two heptameric rings stacked back-to-back. Interacts with the co-chaperonin GroES.

It is found in the cytoplasm. It carries out the reaction ATP + H2O + a folded polypeptide = ADP + phosphate + an unfolded polypeptide.. Together with its co-chaperonin GroES, plays an essential role in assisting protein folding. The GroEL-GroES system forms a nano-cage that allows encapsulation of the non-native substrate proteins and provides a physical environment optimized to promote and accelerate protein folding. This Streptococcus pyogenes serotype M3 (strain SSI-1) protein is Chaperonin GroEL.